A 275-amino-acid polypeptide reads, in one-letter code: Large ribosomal subunit protein uL2c (275 aa).

The segment at 222–258 is disordered; sequence GSAMNPVDHPHGGGEGRAPIGRARPVSPWGRPALGAK.

This sequence belongs to the universal ribosomal protein uL2 family. Part of the 50S ribosomal subunit.

It localises to the plastid. The protein localises to the chloroplast. In Chlorella vulgaris (Green alga), this protein is Large ribosomal subunit protein uL2c (rpl2).